The sequence spans 188 residues: Elongation factor P (188 aa).

It belongs to the elongation factor P family.

The protein localises to the cytoplasm. It participates in protein biosynthesis; polypeptide chain elongation. Involved in peptide bond synthesis. Stimulates efficient translation and peptide-bond synthesis on native or reconstituted 70S ribosomes in vitro. Probably functions indirectly by altering the affinity of the ribosome for aminoacyl-tRNA, thus increasing their reactivity as acceptors for peptidyl transferase. The polypeptide is Elongation factor P (Acidiphilium cryptum (strain JF-5)).